The following is a 219-amino-acid chain: Guanylate kinase (219 aa).

The 180-residue stretch at 15–194 folds into the Guanylate kinase-like domain; that stretch reads GLMLVISSPS…AFSSVRAIVE (180 aa). ATP is bound at residue 22–29; the sequence is SPSGAGKS.

It belongs to the guanylate kinase family.

Its subcellular location is the cytoplasm. The catalysed reaction is GMP + ATP = GDP + ADP. In terms of biological role, essential for recycling GMP and indirectly, cGMP. The protein is Guanylate kinase of Rhizobium meliloti (strain 1021) (Ensifer meliloti).